A 456-amino-acid polypeptide reads, in one-letter code: Bifunctional protein GlmU (456 aa).

The pyrophosphorylase stretch occupies residues 1–229 (MLNNAMSVVI…LSEVEGVNNR (229 aa)). Residues 11–14 (LAAG), K25, Q76, 81–82 (GT), 103–105 (YGD), G140, E154, N169, and N227 contribute to the UDP-N-acetyl-alpha-D-glucosamine site. Residue D105 participates in Mg(2+) binding. Mg(2+) is bound at residue N227. The tract at residues 230-250 (LQLSRLERVYQFEQAEKLLLA) is linker. Residues 251 to 456 (GVMLRDPARF…EGWRRPVKKK (206 aa)) are N-acetyltransferase. 2 residues coordinate UDP-N-acetyl-alpha-D-glucosamine: R333 and K351. H363 functions as the Proton acceptor in the catalytic mechanism. Residues Y366 and N377 each contribute to the UDP-N-acetyl-alpha-D-glucosamine site. Residues A380, 386 to 387 (NY), S405, A423, and R440 contribute to the acetyl-CoA site.

The protein in the N-terminal section; belongs to the N-acetylglucosamine-1-phosphate uridyltransferase family. In the C-terminal section; belongs to the transferase hexapeptide repeat family. In terms of assembly, homotrimer. Mg(2+) serves as cofactor.

The protein resides in the cytoplasm. The catalysed reaction is alpha-D-glucosamine 1-phosphate + acetyl-CoA = N-acetyl-alpha-D-glucosamine 1-phosphate + CoA + H(+). It catalyses the reaction N-acetyl-alpha-D-glucosamine 1-phosphate + UTP + H(+) = UDP-N-acetyl-alpha-D-glucosamine + diphosphate. It participates in nucleotide-sugar biosynthesis; UDP-N-acetyl-alpha-D-glucosamine biosynthesis; N-acetyl-alpha-D-glucosamine 1-phosphate from alpha-D-glucosamine 6-phosphate (route II): step 2/2. The protein operates within nucleotide-sugar biosynthesis; UDP-N-acetyl-alpha-D-glucosamine biosynthesis; UDP-N-acetyl-alpha-D-glucosamine from N-acetyl-alpha-D-glucosamine 1-phosphate: step 1/1. Its pathway is bacterial outer membrane biogenesis; LPS lipid A biosynthesis. Catalyzes the last two sequential reactions in the de novo biosynthetic pathway for UDP-N-acetylglucosamine (UDP-GlcNAc). The C-terminal domain catalyzes the transfer of acetyl group from acetyl coenzyme A to glucosamine-1-phosphate (GlcN-1-P) to produce N-acetylglucosamine-1-phosphate (GlcNAc-1-P), which is converted into UDP-GlcNAc by the transfer of uridine 5-monophosphate (from uridine 5-triphosphate), a reaction catalyzed by the N-terminal domain. The polypeptide is Bifunctional protein GlmU (Escherichia coli O7:K1 (strain IAI39 / ExPEC)).